Reading from the N-terminus, the 423-residue chain is 3-phosphoshikimate 1-carboxyvinyltransferase (423 aa).

Positions 21, 22, and 26 each coordinate 3-phosphoshikimate. Lysine 21 provides a ligand contact to phosphoenolpyruvate. Phosphoenolpyruvate is bound by residues glycine 93 and arginine 123. The 3-phosphoshikimate site is built by serine 168, serine 169, glutamine 170, serine 196, aspartate 311, and lysine 338. A phosphoenolpyruvate-binding site is contributed by glutamine 170. Residue aspartate 311 is the Proton acceptor of the active site. Phosphoenolpyruvate contacts are provided by arginine 342, arginine 383, and lysine 408.

Belongs to the EPSP synthase family. As to quaternary structure, monomer.

It localises to the cytoplasm. It catalyses the reaction 3-phosphoshikimate + phosphoenolpyruvate = 5-O-(1-carboxyvinyl)-3-phosphoshikimate + phosphate. It participates in metabolic intermediate biosynthesis; chorismate biosynthesis. Functionally, catalyzes the transfer of the enolpyruvyl moiety of phosphoenolpyruvate (PEP) to the 5-hydroxyl of shikimate-3-phosphate (S3P) to produce enolpyruvyl shikimate-3-phosphate and inorganic phosphate. This Methanosphaerula palustris (strain ATCC BAA-1556 / DSM 19958 / E1-9c) protein is 3-phosphoshikimate 1-carboxyvinyltransferase.